The following is a 660-amino-acid chain: DNA ligase (660 aa).

NAD(+) is bound by residues 31-35 (DKEYD), 79-80 (SL), and Glu111. The N6-AMP-lysine intermediate role is filled by Lys113. Residues Arg134, Glu168, Lys280, and Lys304 each contribute to the NAD(+) site. Zn(2+) is bound by residues Cys397, Cys400, Cys413, and Cys419. The BRCT domain occupies 577–660 (RQESIFSGKT…LDEAAFEALL (84 aa)).

This sequence belongs to the NAD-dependent DNA ligase family. LigA subfamily. It depends on Mg(2+) as a cofactor. Requires Mn(2+) as cofactor.

It carries out the reaction NAD(+) + (deoxyribonucleotide)n-3'-hydroxyl + 5'-phospho-(deoxyribonucleotide)m = (deoxyribonucleotide)n+m + AMP + beta-nicotinamide D-nucleotide.. In terms of biological role, DNA ligase that catalyzes the formation of phosphodiester linkages between 5'-phosphoryl and 3'-hydroxyl groups in double-stranded DNA using NAD as a coenzyme and as the energy source for the reaction. It is essential for DNA replication and repair of damaged DNA. This chain is DNA ligase, found in Alkaliphilus metalliredigens (strain QYMF).